The sequence spans 157 residues: Ribonuclease (157 aa).

An N-terminal signal peptide occupies residues 1 to 34 (MMKMEGIALKKRLSWISVCLLVLVSAAGMLFSTA). Positions 35–47 (AKTETSSHKAHTE) are excised as a propeptide. Glu120 functions as the Proton acceptor in the catalytic mechanism. His149 (proton donor) is an active-site residue.

This sequence belongs to the ribonuclease N1/T1 family.

It is found in the secreted. Functionally, hydrolyzes phosphodiester bonds in RNA, poly- and oligoribonucleotides resulting in 3'-nucleoside monophosphates via 2',3'-cyclophosphate intermediates. This Bacillus amyloliquefaciens (Bacillus velezensis) protein is Ribonuclease.